Reading from the N-terminus, the 205-residue chain is Large ribosomal subunit protein bL25 (205 aa).

The interval 185–205 is disordered; that stretch reads PAGAVSEAAEGGEAAGETPAA. Residues 186–205 show a composition bias toward low complexity; that stretch reads AGAVSEAAEGGEAAGETPAA.

It belongs to the bacterial ribosomal protein bL25 family. CTC subfamily. Part of the 50S ribosomal subunit; part of the 5S rRNA/L5/L18/L25 subcomplex. Contacts the 5S rRNA. Binds to the 5S rRNA independently of L5 and L18.

In terms of biological role, this is one of the proteins that binds to the 5S RNA in the ribosome where it forms part of the central protuberance. In Cupriavidus taiwanensis (strain DSM 17343 / BCRC 17206 / CCUG 44338 / CIP 107171 / LMG 19424 / R1) (Ralstonia taiwanensis (strain LMG 19424)), this protein is Large ribosomal subunit protein bL25.